A 253-amino-acid chain; its full sequence is Triosephosphate isomerase (253 aa).

9-11 serves as a coordination point for substrate; sequence NWK. The Electrophile role is filled by His-96. Catalysis depends on Glu-168, which acts as the Proton acceptor. Substrate is bound by residues Gly-174, Ser-213, and 234-235; that span reads GG.

It belongs to the triosephosphate isomerase family. Homodimer.

It localises to the cytoplasm. The catalysed reaction is D-glyceraldehyde 3-phosphate = dihydroxyacetone phosphate. The protein operates within carbohydrate biosynthesis; gluconeogenesis. It participates in carbohydrate degradation; glycolysis; D-glyceraldehyde 3-phosphate from glycerone phosphate: step 1/1. Functionally, involved in the gluconeogenesis. Catalyzes stereospecifically the conversion of dihydroxyacetone phosphate (DHAP) to D-glyceraldehyde-3-phosphate (G3P). The polypeptide is Triosephosphate isomerase (Hydrogenovibrio crunogenus (strain DSM 25203 / XCL-2) (Thiomicrospira crunogena)).